The sequence spans 132 residues: Translation initiation factor 5A (132 aa).

Position 36 is a hypusine (lysine 36).

The protein belongs to the eIF-5A family.

Its subcellular location is the cytoplasm. In terms of biological role, functions by promoting the formation of the first peptide bond. This Methanosphaera stadtmanae (strain ATCC 43021 / DSM 3091 / JCM 11832 / MCB-3) protein is Translation initiation factor 5A.